Here is a 262-residue protein sequence, read N- to C-terminus: MNSSFSAPAKKSLGQHFLADRYYIDRIVQAVDPRAGQHLVEIGPGQGAITFPLLRKHGALTVIEFDRDLIAPLTEAAAPIGALSIIHRDVLSVDFTALADGTPIRLVGNLPYNISSPILFHALDHAAVVADMHFMLQKEVVDRMAAGPGSKVYGRLSVMLQAYCDVTALFVVPPGAFRPPPKVDSAVVRLVPRDPATVHINDRRRFADVVRAGFGQRRKTLRNALSTVCEPAHFEAAQVRPDARAEQLEVADFIRLANVEPA.

Positions 16, 18, 43, 64, 89, and 109 each coordinate S-adenosyl-L-methionine.

Belongs to the class I-like SAM-binding methyltransferase superfamily. rRNA adenine N(6)-methyltransferase family. RsmA subfamily.

It localises to the cytoplasm. It catalyses the reaction adenosine(1518)/adenosine(1519) in 16S rRNA + 4 S-adenosyl-L-methionine = N(6)-dimethyladenosine(1518)/N(6)-dimethyladenosine(1519) in 16S rRNA + 4 S-adenosyl-L-homocysteine + 4 H(+). Its function is as follows. Specifically dimethylates two adjacent adenosines (A1518 and A1519) in the loop of a conserved hairpin near the 3'-end of 16S rRNA in the 30S particle. May play a critical role in biogenesis of 30S subunits. This Xanthomonas oryzae pv. oryzae (strain MAFF 311018) protein is Ribosomal RNA small subunit methyltransferase A.